Consider the following 774-residue polypeptide: Subtilisin-like protease SBT3.5 (774 aa).

Positions 1–23 are cleaved as a signal peptide; the sequence is MRNCRVLLVLVLSLVIVLNVVRA. Residues 24 to 108 constitute a propeptide, removed in mature form; the sequence is SDESKVHIVY…VMADSFYELA (85 aa). Residues 29–108 enclose the Inhibitor I9 domain; that stretch reads VHIVYLGEKQ…VMADSFYELA (80 aa). Positions 112-621 constitute a Peptidase S8 domain; that stretch reads TWDYLGLSVA…GGIVNPEKAA (510 aa). Asparagine 128 is a glycosylation site (N-linked (GlcNAc...) asparagine). Aspartate 142 functions as the Charge relay system in the catalytic mechanism. The N-linked (GlcNAc...) asparagine glycan is linked to asparagine 201. The active-site Charge relay system is the histidine 217. Asparagine 232, asparagine 394, asparagine 409, and asparagine 539 each carry an N-linked (GlcNAc...) asparagine glycan. The PA domain occupies 383-478; the sequence is SLVYPENAGF…ELGTDVLLYI (96 aa). Serine 552 functions as the Charge relay system in the catalytic mechanism. 4 N-linked (GlcNAc...) asparagine glycosylation sites follow: asparagine 644, asparagine 654, asparagine 725, and asparagine 755.

Belongs to the peptidase S8 family. Expressed in roots, leaves, stems, flower buds, developing siliques and mature seeds.

It is found in the secreted. The protein resides in the cell wall. Functionally, serine protease that cleaves the pectin methylesterase 17 (PME17) protein to release the PME17 mature form in the apoplasm. The sequence is that of Subtilisin-like protease SBT3.5 from Arabidopsis thaliana (Mouse-ear cress).